Consider the following 390-residue polypeptide: MQNEPLTPGYHGFPARDSQGNQEPTTTPDAMVQPFTTIPFPPPPQNGIPTEYGVPHTQDYAGQTGEHNLTLYGSTQAHGEQSSNSPSTQNGSLTTEGGAQTDGQQSQTQSSENSESKSTPKRLHVSNIPFRFRDPDLRQMFGQFGKILDVEIIFNERGSKGFGFVTFENSADADRAREKLHGTVVEGRKIEVNNATARVMTNKKMVTPYANGWKLSPVVGAVYGPELYAASSFQADVSLGNDAAVPLSGRGGINTYIPLISLPLVPGFPYPTAATTAAAFRGAHLRGRGRTVYGAVRAVPPTAIPAYPGVVYQDGFYGADLYGGYAAYRYAQPATATAATAAAAAAAAYSDGYGRVYTADPYHALAPAASYGVGAVASLYRGGYSRFAPY.

The interval 1–127 is disordered; it reads MQNEPLTPGY…STPKRLHVSN (127 aa). 2 stretches are compositionally biased toward polar residues: residues 18-28 and 65-95; these read SQGNQEPTTTP and GEHN…SLTT. His67 is modified (phosphothreonine). Low complexity predominate over residues 97–117; the sequence is GGAQTDGQQSQTQSSENSESK. An RRM domain is found at 121–197; that stretch reads KRLHVSNIPF…RKIEVNNATA (77 aa). Gly249, Gly267, Phe268, Ala277, and Arg281 each carry omega-N-methylarginine. Arg297 and Arg329 each carry asymmetric dimethylarginine. Residues Arg381 and Arg386 each carry the asymmetric dimethylarginine; alternate modification. Omega-N-methylarginine; alternate is present on residues Arg381 and Arg386.

Interacts with ER-alpha N-terminal activation domain. Interacts with RBPMS; the interaction allows cooperative assembly of stable cell-specific alternative splicing regulatory complexes.

It localises to the nucleus. Its subcellular location is the cytoplasm. Functionally, RNA-binding protein that regulates alternative splicing events by binding to 5'-UGCAUGU-3' elements. Prevents binding of U2AF2 to the 3'-splice site. Regulates alternative splicing of tissue-specific exons and of differentially spliced exons during erythropoiesis. RNA-binding protein that seems to act as a coregulatory factor of ER-alpha. Together with RNA binding proteins RBPMS and MBNL1/2, activates vascular smooth muscle cells alternative splicing events. The chain is RNA binding protein fox-1 homolog 2 (RBFOX2) from Homo sapiens (Human).